Consider the following 215-residue polypeptide: Adenylate kinase (215 aa).

Gly10 to Thr15 serves as a coordination point for ATP. The tract at residues Ser30–Val59 is NMP. Residues Thr31, Arg36, Glu57–Val59, Gly85–Arg88, and Gln92 each bind AMP. Residues Gly126–Asp162 form an LID region. Arg127 is an ATP binding site. Residues Cys130 and Cys132 each coordinate Zn(2+). Ser135–Tyr136 lines the ATP pocket. Cys149 and Cys152 together coordinate Zn(2+). Residues Arg159 and Arg170 each contribute to the AMP site. Lys198 contacts ATP.

It belongs to the adenylate kinase family. Monomer.

Its subcellular location is the cytoplasm. It catalyses the reaction AMP + ATP = 2 ADP. Its pathway is purine metabolism; AMP biosynthesis via salvage pathway; AMP from ADP: step 1/1. Catalyzes the reversible transfer of the terminal phosphate group between ATP and AMP. Plays an important role in cellular energy homeostasis and in adenine nucleotide metabolism. In Methanosarcina mazei (strain ATCC BAA-159 / DSM 3647 / Goe1 / Go1 / JCM 11833 / OCM 88) (Methanosarcina frisia), this protein is Adenylate kinase.